The primary structure comprises 726 residues: Mitotic spindle checkpoint protein MAD1 (726 aa).

The disordered stretch occupies residues 1–30; that stretch reads MILRTPQPKRLRSDAGESPFPTGATGSGNQ. 2 coiled-coil regions span residues 68–246 and 272–625; these read ADVL…LKLI and SDNS…VFAD.

Belongs to the MAD1 family. As to quaternary structure, homodimer. Part of the mitotic checkpoint complex (MCC). Interacts with MAD2 and NUA.

Its subcellular location is the nucleus envelope. Functionally, required for the execution of the mitotic checkpoint which monitors the process of kinetochore-spindle attachment and delays the onset of anaphase when this process is not complete. It inhibits the activity of the anaphase promoting complex by sequestering CDC20 until all chromosomes are aligned at the metaphase plate. Required for anchoring MAD2 to the nuclear envelope. This chain is Mitotic spindle checkpoint protein MAD1, found in Arabidopsis thaliana (Mouse-ear cress).